The primary structure comprises 88 residues: Alpha-latrotoxin associated low molecular weight protein 2 (88 aa).

An N-terminal signal peptide occupies residues 1–19; it reads MLKLICIVFLVTVLTFVVG. 3 disulfide bridges follow: cysteine 30/cysteine 66, cysteine 46/cysteine 62, and cysteine 49/cysteine 75.

This sequence belongs to the arthropod CHH/MIH/GIH/VIH hormone family. In terms of tissue distribution, expressed by the venom gland.

It localises to the secreted. May increase the toxicity of alpha-latrotoxin and/or other venom components. Is non-toxic to mice and to the cockroach Periplaneta americana. The sequence is that of Alpha-latrotoxin associated low molecular weight protein 2 from Latrodectus geometricus (Brown widow spider).